The sequence spans 40 residues: Photosystem II reaction center protein J (40 aa).

A helical transmembrane segment spans residues 8 to 28; it reads IPLWLIGTVTGIIVIGLLGIF.

Belongs to the PsbJ family. In terms of assembly, PSII is composed of 1 copy each of membrane proteins PsbA, PsbB, PsbC, PsbD, PsbE, PsbF, PsbH, PsbI, PsbJ, PsbK, PsbL, PsbM, PsbT, PsbX, PsbY, PsbZ, Psb30/Ycf12, at least 3 peripheral proteins of the oxygen-evolving complex and a large number of cofactors. It forms dimeric complexes.

The protein resides in the plastid. It localises to the chloroplast thylakoid membrane. Its function is as follows. One of the components of the core complex of photosystem II (PSII). PSII is a light-driven water:plastoquinone oxidoreductase that uses light energy to abstract electrons from H(2)O, generating O(2) and a proton gradient subsequently used for ATP formation. It consists of a core antenna complex that captures photons, and an electron transfer chain that converts photonic excitation into a charge separation. The sequence is that of Photosystem II reaction center protein J from Pinus koraiensis (Korean pine).